A 409-amino-acid chain; its full sequence is Tyrosine--tRNA ligase (409 aa).

Residue Tyr-35 coordinates L-tyrosine. The 'HIGH' region motif lies at 40 to 49 (PTGSSLHVGH). L-tyrosine-binding residues include Tyr-168 and Gln-172. The short motif at 228-232 (KMGKT) is the 'KMSKS' region element. An ATP-binding site is contributed by Lys-231. An S4 RNA-binding domain is found at 339 to 404 (IKVTDLFVQV…AGKKRVVRIV (66 aa)).

This sequence belongs to the class-I aminoacyl-tRNA synthetase family. TyrS type 1 subfamily. Homodimer.

The protein resides in the cytoplasm. It carries out the reaction tRNA(Tyr) + L-tyrosine + ATP = L-tyrosyl-tRNA(Tyr) + AMP + diphosphate + H(+). Functionally, catalyzes the attachment of tyrosine to tRNA(Tyr) in a two-step reaction: tyrosine is first activated by ATP to form Tyr-AMP and then transferred to the acceptor end of tRNA(Tyr). The protein is Tyrosine--tRNA ligase of Treponema pallidum (strain Nichols).